The sequence spans 170 residues: Acireductone dioxygenase (170 aa).

H99, H101, E105, and H144 together coordinate Fe(2+). Residues H99, H101, E105, and H144 each contribute to the Ni(2+) site.

It belongs to the acireductone dioxygenase (ARD) family. As to quaternary structure, monomer. The cofactor is Fe(2+). Requires Ni(2+) as cofactor.

It catalyses the reaction 1,2-dihydroxy-5-(methylsulfanyl)pent-1-en-3-one + O2 = 3-(methylsulfanyl)propanoate + CO + formate + 2 H(+). It carries out the reaction 1,2-dihydroxy-5-(methylsulfanyl)pent-1-en-3-one + O2 = 4-methylsulfanyl-2-oxobutanoate + formate + 2 H(+). Its pathway is amino-acid biosynthesis; L-methionine biosynthesis via salvage pathway; L-methionine from S-methyl-5-thio-alpha-D-ribose 1-phosphate: step 5/6. Catalyzes 2 different reactions between oxygen and the acireductone 1,2-dihydroxy-3-keto-5-methylthiopentene (DHK-MTPene) depending upon the metal bound in the active site. Fe-containing acireductone dioxygenase (Fe-ARD) produces formate and 2-keto-4-methylthiobutyrate (KMTB), the alpha-ketoacid precursor of methionine in the methionine recycle pathway. Ni-containing acireductone dioxygenase (Ni-ARD) produces methylthiopropionate, carbon monoxide and formate, and does not lie on the methionine recycle pathway. The polypeptide is Acireductone dioxygenase (Bacillus cereus (strain ATCC 14579 / DSM 31 / CCUG 7414 / JCM 2152 / NBRC 15305 / NCIMB 9373 / NCTC 2599 / NRRL B-3711)).